A 230-amino-acid chain; its full sequence is Large ribosomal subunit protein uL1 (230 aa).

This sequence belongs to the universal ribosomal protein uL1 family. In terms of assembly, part of the 50S ribosomal subunit.

Functionally, binds directly to 23S rRNA. The L1 stalk is quite mobile in the ribosome, and is involved in E site tRNA release. In terms of biological role, protein L1 is also a translational repressor protein, it controls the translation of the L11 operon by binding to its mRNA. The protein is Large ribosomal subunit protein uL1 of Acholeplasma laidlawii (strain PG-8A).